The primary structure comprises 432 residues: Phosphomethylpyrimidine synthase (432 aa).

Substrate contacts are provided by residues N66, M95, Y124, H163, 185–187 (SRG), 226–229 (DGMR), and E265. H269 contributes to the Zn(2+) binding site. Y292 is a substrate binding site. Zn(2+) is bound at residue H333. Residues C409, C412, and C416 each coordinate [4Fe-4S] cluster.

The protein belongs to the ThiC family. Requires [4Fe-4S] cluster as cofactor.

It catalyses the reaction 5-amino-1-(5-phospho-beta-D-ribosyl)imidazole + S-adenosyl-L-methionine = 4-amino-2-methyl-5-(phosphooxymethyl)pyrimidine + CO + 5'-deoxyadenosine + formate + L-methionine + 3 H(+). It functions in the pathway cofactor biosynthesis; thiamine diphosphate biosynthesis. Catalyzes the synthesis of the hydroxymethylpyrimidine phosphate (HMP-P) moiety of thiamine from aminoimidazole ribotide (AIR) in a radical S-adenosyl-L-methionine (SAM)-dependent reaction. The polypeptide is Phosphomethylpyrimidine synthase (Desulforudis audaxviator (strain MP104C)).